The primary structure comprises 632 residues: tRNA-guanine(15) transglycosylase (632 aa).

The active-site Nucleophile is the aspartate 86. The substrate site is built by aspartate 121 and glycine 186. Residues 553–628 (NLRVFVKNES…IAVKIHEGRD (76 aa)) enclose the PUA domain.

It belongs to the archaeosine tRNA-ribosyltransferase family. Requires Zn(2+) as cofactor.

It catalyses the reaction guanosine(15) in tRNA + 7-cyano-7-deazaguanine = 7-cyano-7-carbaguanosine(15) in tRNA + guanine. The protein operates within tRNA modification; archaeosine-tRNA biosynthesis. In terms of biological role, exchanges the guanine residue with 7-cyano-7-deazaguanine (preQ0) at position 15 in the dihydrouridine loop (D-loop) of archaeal tRNAs. The chain is tRNA-guanine(15) transglycosylase from Thermoplasma volcanium (strain ATCC 51530 / DSM 4299 / JCM 9571 / NBRC 15438 / GSS1).